The sequence spans 115 residues: Toxin-like structure LSTX-D2 (115 aa).

The N-terminal stretch at 1–22 (MKVLVLFSVLFLTLFSYSSTEA) is a signal peptide. A propeptide spanning residues 23–44 (IDEFDSDAEDDMLSLMANEQVR) is cleaved from the precursor. Intrachain disulfides connect C48–C63, C55–C72, C62–C87, and C74–C85.

This sequence belongs to the neurotoxin 19 (CSTX) family. 01 subfamily. Expressed by the venom gland.

It is found in the secreted. This chain is Toxin-like structure LSTX-D2, found in Lycosa singoriensis (Wolf spider).